The sequence spans 393 residues: Acetylornithine aminotransferase (393 aa).

Residues 100–101 (GA) and phenylalanine 133 contribute to the pyridoxal 5'-phosphate site. Arginine 136 contributes to the N(2)-acetyl-L-ornithine binding site. A pyridoxal 5'-phosphate-binding site is contributed by 218–221 (DEVQ). The residue at position 247 (lysine 247) is an N6-(pyridoxal phosphate)lysine. Serine 274 serves as a coordination point for N(2)-acetyl-L-ornithine. Threonine 275 is a binding site for pyridoxal 5'-phosphate.

It belongs to the class-III pyridoxal-phosphate-dependent aminotransferase family. ArgD subfamily. Homodimer. Requires pyridoxal 5'-phosphate as cofactor.

The protein localises to the cytoplasm. It carries out the reaction N(2)-acetyl-L-ornithine + 2-oxoglutarate = N-acetyl-L-glutamate 5-semialdehyde + L-glutamate. Its pathway is amino-acid biosynthesis; L-arginine biosynthesis; N(2)-acetyl-L-ornithine from L-glutamate: step 4/4. The sequence is that of Acetylornithine aminotransferase from Caldanaerobacter subterraneus subsp. tengcongensis (strain DSM 15242 / JCM 11007 / NBRC 100824 / MB4) (Thermoanaerobacter tengcongensis).